The following is a 261-amino-acid chain: Secreted RxLR effector protein 154 (261 aa).

The signal sequence occupies residues 1–18 (MRRCALLFRLFLISYSCS). The RxLR-dEER motif lies at 49–64 (RILQADDPEHIRTEER).

This sequence belongs to the RxLR effector family.

Its subcellular location is the secreted. The protein localises to the host cell membrane. Functionally, secreted effector that completely suppresses the host cell death induced by cell death-inducing proteins. This chain is Secreted RxLR effector protein 154, found in Plasmopara viticola (Downy mildew of grapevine).